We begin with the raw amino-acid sequence, 160 residues long: Protein-export protein SecB (160 aa).

It belongs to the SecB family. Homotetramer, a dimer of dimers. One homotetramer interacts with 1 SecA dimer.

The protein resides in the cytoplasm. Functionally, one of the proteins required for the normal export of preproteins out of the cell cytoplasm. It is a molecular chaperone that binds to a subset of precursor proteins, maintaining them in a translocation-competent state. It also specifically binds to its receptor SecA. The sequence is that of Protein-export protein SecB from Rhizobium etli (strain ATCC 51251 / DSM 11541 / JCM 21823 / NBRC 15573 / CFN 42).